We begin with the raw amino-acid sequence, 189 residues long: Large ribosomal subunit protein eL18 (189 aa).

Belongs to the eukaryotic ribosomal protein eL18 family.

It is found in the cytoplasm. The polypeptide is Large ribosomal subunit protein eL18 (RpL18) (Aedes aegypti (Yellowfever mosquito)).